Here is a 422-residue protein sequence, read N- to C-terminus: Adenylosuccinate synthetase (422 aa).

Residues 11–17 and 39–41 each bind GTP; these read GDEGKGK and GHT. Aspartate 12 functions as the Proton acceptor in the catalytic mechanism. Aspartate 12 and glycine 39 together coordinate Mg(2+). IMP contacts are provided by residues 12-15, 37-40, threonine 129, arginine 143, asparagine 219, threonine 234, and arginine 298; these read DEGK and NAGH. Histidine 40 (proton donor) is an active-site residue. 294-300 is a binding site for substrate; the sequence is VTTGRRR. Residues arginine 300, 326–328, and 409–411 each bind GTP; these read KLD and GTG.

Belongs to the adenylosuccinate synthetase family. Homodimer. Mg(2+) is required as a cofactor.

The protein localises to the cytoplasm. The catalysed reaction is IMP + L-aspartate + GTP = N(6)-(1,2-dicarboxyethyl)-AMP + GDP + phosphate + 2 H(+). It functions in the pathway purine metabolism; AMP biosynthesis via de novo pathway; AMP from IMP: step 1/2. Its function is as follows. Plays an important role in the de novo pathway and in the salvage pathway of purine nucleotide biosynthesis. Catalyzes the first committed step in the biosynthesis of AMP from IMP. The sequence is that of Adenylosuccinate synthetase from Ajellomyces capsulatus (strain H143) (Darling's disease fungus).